The following is a 349-amino-acid chain: MHDRFLRACRREPTDVTPVWFMRQAGRYMAEYRELRKKYTLLEICKTPELALEVTLQPLRLGMDAAILFADILLPLEPMGAPFEFAKGEGPVIHEPVRDRAGIERLRVFEPEEGLGYVLDAVRLIRKELDGKTPLIGFAGAPFTMASYLVEGGKSSDYRLTKQLMWSDPEAWSALMGKISEVVRRLLRAQVAAGAQAVQLFDSWVGSLSIDDYREHVQPHVRYILRDLEATGVPVIHFGTNTGALLEAQRDAGGTVIGVDWRTPLDKAWQRVGYDRAVQGNLDPLLLCAPRAVAERRARAVLEEAGGRAGHIFNLGHGIIPETPVDTVKAVIDLVHSIPRASLQGEPDR.

Residues 23-27 (RQAGR), D71, Y148, S203, and H317 contribute to the substrate site.

The protein belongs to the uroporphyrinogen decarboxylase family. Homodimer.

It localises to the cytoplasm. The catalysed reaction is uroporphyrinogen III + 4 H(+) = coproporphyrinogen III + 4 CO2. The protein operates within porphyrin-containing compound metabolism; protoporphyrin-IX biosynthesis; coproporphyrinogen-III from 5-aminolevulinate: step 4/4. Catalyzes the decarboxylation of four acetate groups of uroporphyrinogen-III to yield coproporphyrinogen-III. The chain is Uroporphyrinogen decarboxylase from Sorangium cellulosum (strain So ce56) (Polyangium cellulosum (strain So ce56)).